Consider the following 168-residue polypeptide: 2-C-methyl-D-erythritol 2,4-cyclodiphosphate synthase (168 aa).

Positions 11 and 13 each coordinate a divalent metal cation. 4-CDP-2-C-methyl-D-erythritol 2-phosphate contacts are provided by residues aspartate 11–histidine 13 and histidine 38–serine 39. Histidine 46 contributes to the a divalent metal cation binding site. Residues aspartate 60–glycine 62, threonine 133–aspartate 136, phenylalanine 140, and arginine 143 contribute to the 4-CDP-2-C-methyl-D-erythritol 2-phosphate site.

This sequence belongs to the IspF family. Homotrimer. A divalent metal cation is required as a cofactor.

The catalysed reaction is 4-CDP-2-C-methyl-D-erythritol 2-phosphate = 2-C-methyl-D-erythritol 2,4-cyclic diphosphate + CMP. Its pathway is isoprenoid biosynthesis; isopentenyl diphosphate biosynthesis via DXP pathway; isopentenyl diphosphate from 1-deoxy-D-xylulose 5-phosphate: step 4/6. Its function is as follows. Involved in the biosynthesis of isopentenyl diphosphate (IPP) and dimethylallyl diphosphate (DMAPP), two major building blocks of isoprenoid compounds. Catalyzes the conversion of 4-diphosphocytidyl-2-C-methyl-D-erythritol 2-phosphate (CDP-ME2P) to 2-C-methyl-D-erythritol 2,4-cyclodiphosphate (ME-CPP) with a corresponding release of cytidine 5-monophosphate (CMP). This is 2-C-methyl-D-erythritol 2,4-cyclodiphosphate synthase from Cutibacterium acnes (strain DSM 16379 / KPA171202) (Propionibacterium acnes).